The following is a 330-amino-acid chain: MALFDWHKHFDPVLSYLNETGNTRWTTALKEQLTRRFEDNPHGDMERWHNALQSLPDVADARVDLNRSAITLTSPSGLDPDAMTRLENGLRGLMPWRKGPFDFFGTYIDTEWRSDWKWDRVAPHLADLAGRTILDVGCGSGYHCWRMAGAGARQVIGIDPGLLFMFQFLAVKGYLGQAPVDLLPVRMEDLPADMECFDTTFSMGVLYHRRSPLDHLLELKGTLRRGGELVLETLVVDGPEGYSLMPEDRYGQMRNVWFLPSCPTLLRWLDRTGFRNARVVDVSETTTDEQRQTDWMRFNSLADFLDPDNPSKTIEGYPGPKRATLIAEKP.

Carboxy-S-adenosyl-L-methionine contacts are provided by residues Lys-98, Trp-112, Lys-117, Gly-137, 187-188, Met-203, Tyr-207, and Arg-322; that span reads ME. The tract at residues 309-330 is disordered; that stretch reads NPSKTIEGYPGPKRATLIAEKP.

This sequence belongs to the class I-like SAM-binding methyltransferase superfamily. CmoB family. Homotetramer.

The catalysed reaction is carboxy-S-adenosyl-L-methionine + 5-hydroxyuridine(34) in tRNA = 5-carboxymethoxyuridine(34) in tRNA + S-adenosyl-L-homocysteine + H(+). In terms of biological role, catalyzes carboxymethyl transfer from carboxy-S-adenosyl-L-methionine (Cx-SAM) to 5-hydroxyuridine (ho5U) to form 5-carboxymethoxyuridine (cmo5U) at position 34 in tRNAs. This Marinobacter nauticus (strain ATCC 700491 / DSM 11845 / VT8) (Marinobacter aquaeolei) protein is tRNA U34 carboxymethyltransferase.